The primary structure comprises 79 residues: Small ribosomal subunit protein bS21A (79 aa).

Residues 57–79 form a disordered region; that stretch reads LARKKLQREGLLPAPKKVLRPTR.

The protein belongs to the bacterial ribosomal protein bS21 family.

The protein is Small ribosomal subunit protein bS21A of Rhizobium johnstonii (strain DSM 114642 / LMG 32736 / 3841) (Rhizobium leguminosarum bv. viciae).